The following is a 478-amino-acid chain: MKMSIWTPPRLLELAGRSLLRDQALAMSTLEELPTELFPPLFMEAFSRRRCEALKLMVQSWPFRRLPLRPLIKMPCLEAFQAVLDGLDALLNLGVRPRRWKLQVLDLQDVCENFWMVWSEAMAHGCFLNAKRNKKPVEDCPRMKGRQPLTVFVELWLKNRTLDEYLTCLLLWVKQRKDLLHLCCKKLKILGMPFRNIRSILKMVNLDCIQEVEVNCKWVLPILTQFTPYLGHMRNLQKLILSHMDVSRYVSPEQKKEIVTQFTTQFLKLRCLQKLYMNSVSFLEGHLDQLLSCLKTSLKFLTITNCVLLESDLKHLSQCPSISQLKTLDLSGIRLTNYSLVPLQILLEKVAATLEYLDLDDCGIIDSQVNAILPALSRCFELNTFSFCGNPICMATLENLLSHTIILKNLCVELYPAPRESYGADGTLCWSRFAQIRAELMNRVRDLRHPKRILFCTDYCPDCGNRSFYDLEADQYCC.

Residues 99–126 form an LRR 1; degenerate repeat; it reads RWKLQVLDLQDVCENFWMVWSEAMAHGC. The stretch at 181–205 is one LRR 2; degenerate repeat; that stretch reads HLCCKKLKILGMPFRNIRSILKMVN. An LRR 3; degenerate repeat occupies 206–232; it reads LDCIQEVEVNCKWVLPILTQFTPYLGH. One copy of the LRR 4; degenerate repeat lies at 233-268; it reads MRNLQKLILSHMDVSRYVSPEQKKEIVTQFTTQFLK. LRR repeat units lie at residues 269–294, 295–326, 327–347, 351–378, and 379–403; these read LRCLQKLYMNSVSFLEGHLDQLLSCL, KTSLKFLTITNCVLLESDLKHLSQCPSISQLK, TLDLSGIRLTNYSLVPLQILL, AATLEYLDLDDCGIIDSQVNAILPALSR, and CFELNTFSFCGNPICMATLENLLSH.

This sequence belongs to the PRAME family.

In Homo sapiens (Human), this protein is PRAME family member 4.